We begin with the raw amino-acid sequence, 119 residues long: Ribosome-binding factor A (119 aa).

The protein belongs to the RbfA family. In terms of assembly, monomer. Binds 30S ribosomal subunits, but not 50S ribosomal subunits or 70S ribosomes.

The protein localises to the cytoplasm. One of several proteins that assist in the late maturation steps of the functional core of the 30S ribosomal subunit. Associates with free 30S ribosomal subunits (but not with 30S subunits that are part of 70S ribosomes or polysomes). Required for efficient processing of 16S rRNA. May interact with the 5'-terminal helix region of 16S rRNA. The polypeptide is Ribosome-binding factor A (Buchnera aphidicola subsp. Baizongia pistaciae (strain Bp)).